The chain runs to 454 residues: NADP-specific glutamate dehydrogenase 1 (454 aa).

The active site involves K110. 174–203 contributes to the NAD(+) binding site; sequence GVLTGKGLNWGGSLIRPEATGYGLVYYTQA.

This sequence belongs to the Glu/Leu/Phe/Val dehydrogenases family. Homohexamer.

It catalyses the reaction L-glutamate + NADP(+) + H2O = 2-oxoglutarate + NH4(+) + NADPH + H(+). The protein is NADP-specific glutamate dehydrogenase 1 (GDH1) of Saccharomyces uvarum (strain ATCC 76518 / CBS 7001 / CLIB 283 / NBRC 10550 / MCYC 623 / NCYC 2669 / NRRL Y-11845) (Yeast).